Consider the following 263-residue polypeptide: Endonuclease 8 (263 aa).

Catalysis depends on Pro-2, which acts as the Schiff-base intermediate with DNA. The active-site Proton donor is the Glu-3. The Proton donor; for beta-elimination activity role is filled by Lys-53. DNA-binding residues include Gln-70, Arg-125, and Asn-169. An FPG-type zinc finger spans residues 229 to 263; it reads KVFHRDGEPCERCGGIIEKTTLSSRPFYWCPGCQH. The Proton donor; for delta-elimination activity role is filled by Arg-253.

The protein belongs to the FPG family. Zn(2+) is required as a cofactor.

It catalyses the reaction 2'-deoxyribonucleotide-(2'-deoxyribose 5'-phosphate)-2'-deoxyribonucleotide-DNA = a 3'-end 2'-deoxyribonucleotide-(2,3-dehydro-2,3-deoxyribose 5'-phosphate)-DNA + a 5'-end 5'-phospho-2'-deoxyribonucleoside-DNA + H(+). Functionally, involved in base excision repair of DNA damaged by oxidation or by mutagenic agents. Acts as a DNA glycosylase that recognizes and removes damaged bases. Has a preference for oxidized pyrimidines, such as thymine glycol, 5,6-dihydrouracil and 5,6-dihydrothymine. Has AP (apurinic/apyrimidinic) lyase activity and introduces nicks in the DNA strand. Cleaves the DNA backbone by beta-delta elimination to generate a single-strand break at the site of the removed base with both 3'- and 5'-phosphates. This chain is Endonuclease 8, found in Escherichia coli O6:K15:H31 (strain 536 / UPEC).